Reading from the N-terminus, the 615-residue chain is UvrABC system protein C (615 aa).

The GIY-YIG domain occupies 14–91; it reads TSPGCYIHKD…IKENKPKYNI (78 aa). The UVR domain maps to 196-231; sequence NKIIDELKGKMAAAAQTMEFERAAEYRDLIQAIGTL.

It belongs to the UvrC family. Interacts with UvrB in an incision complex.

The protein resides in the cytoplasm. The UvrABC repair system catalyzes the recognition and processing of DNA lesions. UvrC both incises the 5' and 3' sides of the lesion. The N-terminal half is responsible for the 3' incision and the C-terminal half is responsible for the 5' incision. This chain is UvrABC system protein C, found in Streptococcus pneumoniae (strain JJA).